A 435-amino-acid polypeptide reads, in one-letter code: Glutamyl-tRNA reductase (435 aa).

Residues threonine 49–arginine 52, serine 109, glutamate 114–glutamine 116, and glutamine 120 each bind substrate. Residue cysteine 50 is the Nucleophile of the active site. Position 198–203 (glycine 198–serine 203) interacts with NADP(+).

The protein belongs to the glutamyl-tRNA reductase family. As to quaternary structure, homodimer.

The enzyme catalyses (S)-4-amino-5-oxopentanoate + tRNA(Glu) + NADP(+) = L-glutamyl-tRNA(Glu) + NADPH + H(+). It participates in porphyrin-containing compound metabolism; protoporphyrin-IX biosynthesis; 5-aminolevulinate from L-glutamyl-tRNA(Glu): step 1/2. Its pathway is porphyrin-containing compound metabolism; chlorophyll biosynthesis. Catalyzes the NADPH-dependent reduction of glutamyl-tRNA(Glu) to glutamate 1-semialdehyde (GSA). The polypeptide is Glutamyl-tRNA reductase (Prochlorococcus marinus (strain MIT 9515)).